The sequence spans 358 residues: Uroporphyrinogen decarboxylase (358 aa).

Residues 29-33, Asp-79, Tyr-155, Ser-210, and His-330 each bind substrate; that span reads RQAGR.

It belongs to the uroporphyrinogen decarboxylase family. As to quaternary structure, homodimer.

The protein localises to the cytoplasm. The enzyme catalyses uroporphyrinogen III + 4 H(+) = coproporphyrinogen III + 4 CO2. The protein operates within porphyrin-containing compound metabolism; protoporphyrin-IX biosynthesis; coproporphyrinogen-III from 5-aminolevulinate: step 4/4. Its function is as follows. Catalyzes the decarboxylation of four acetate groups of uroporphyrinogen-III to yield coproporphyrinogen-III. In Bordetella petrii (strain ATCC BAA-461 / DSM 12804 / CCUG 43448), this protein is Uroporphyrinogen decarboxylase.